A 638-amino-acid chain; its full sequence is 1-deoxy-D-xylulose-5-phosphate synthase (638 aa).

Thiamine diphosphate-binding positions include H78 and 119-121; that span reads GHS. D151 contributes to the Mg(2+) binding site. Residues 152–153, N180, Y289, and E371 contribute to the thiamine diphosphate site; that span reads GA. Position 180 (N180) interacts with Mg(2+).

It belongs to the transketolase family. DXPS subfamily. As to quaternary structure, homodimer. It depends on Mg(2+) as a cofactor. Thiamine diphosphate serves as cofactor.

The catalysed reaction is D-glyceraldehyde 3-phosphate + pyruvate + H(+) = 1-deoxy-D-xylulose 5-phosphate + CO2. It participates in metabolic intermediate biosynthesis; 1-deoxy-D-xylulose 5-phosphate biosynthesis; 1-deoxy-D-xylulose 5-phosphate from D-glyceraldehyde 3-phosphate and pyruvate: step 1/1. Functionally, catalyzes the acyloin condensation reaction between C atoms 2 and 3 of pyruvate and glyceraldehyde 3-phosphate to yield 1-deoxy-D-xylulose-5-phosphate (DXP). The polypeptide is 1-deoxy-D-xylulose-5-phosphate synthase (Bartonella bacilliformis (strain ATCC 35685 / KC583 / Herrer 020/F12,63)).